The sequence spans 369 residues: tRNA 2-selenouridine synthase (369 aa).

Residues 12-136 (FLDDIPLMDV…LRNFLFETTR (125 aa)) enclose the Rhodanese domain. Residue Cys95 is the S-selanylcysteine intermediate of the active site.

Belongs to the SelU family. As to quaternary structure, monomer.

It catalyses the reaction 5-methylaminomethyl-2-thiouridine(34) in tRNA + selenophosphate + (2E)-geranyl diphosphate + H2O + H(+) = 5-methylaminomethyl-2-selenouridine(34) in tRNA + (2E)-thiogeraniol + phosphate + diphosphate. It carries out the reaction 5-methylaminomethyl-2-thiouridine(34) in tRNA + (2E)-geranyl diphosphate = 5-methylaminomethyl-S-(2E)-geranyl-thiouridine(34) in tRNA + diphosphate. The enzyme catalyses 5-methylaminomethyl-S-(2E)-geranyl-thiouridine(34) in tRNA + selenophosphate + H(+) = 5-methylaminomethyl-2-(Se-phospho)selenouridine(34) in tRNA + (2E)-thiogeraniol. The catalysed reaction is 5-methylaminomethyl-2-(Se-phospho)selenouridine(34) in tRNA + H2O = 5-methylaminomethyl-2-selenouridine(34) in tRNA + phosphate. Its function is as follows. Involved in the post-transcriptional modification of the uridine at the wobble position (U34) of tRNA(Lys), tRNA(Glu) and tRNA(Gln). Catalyzes the conversion of 2-thiouridine (S2U-RNA) to 2-selenouridine (Se2U-RNA). Acts in a two-step process involving geranylation of 2-thiouridine (S2U) to S-geranyl-2-thiouridine (geS2U) and subsequent selenation of the latter derivative to 2-selenouridine (Se2U) in the tRNA chain. This Pseudomonas aeruginosa (strain LESB58) protein is tRNA 2-selenouridine synthase.